The primary structure comprises 282 residues: Acetylglutamate kinase (282 aa).

Substrate contacts are provided by residues 62-63 (GG), Arg84, and Asn178.

Belongs to the acetylglutamate kinase family. ArgB subfamily.

Its subcellular location is the cytoplasm. The catalysed reaction is N-acetyl-L-glutamate + ATP = N-acetyl-L-glutamyl 5-phosphate + ADP. It participates in amino-acid biosynthesis; L-arginine biosynthesis; N(2)-acetyl-L-ornithine from L-glutamate: step 2/4. Catalyzes the ATP-dependent phosphorylation of N-acetyl-L-glutamate. The chain is Acetylglutamate kinase from Thermotoga neapolitana (strain ATCC 49049 / DSM 4359 / NBRC 107923 / NS-E).